Consider the following 437-residue polypeptide: GTPase Obg (437 aa).

Residues 2–160 (SMFLDTAKIS…RQLELELKIL (159 aa)) form the Obg domain. The OBG-type G domain occupies 161 to 338 (ADVGLVGFPS…LLEATAELLA (178 aa)). GTP-binding positions include 167–174 (GFPSVGKS), 192–196 (FTTIV), 214–217 (DLPG), 284–287 (NKMD), and 319–321 (SSL). Residues Ser-174 and Thr-194 each contribute to the Mg(2+) site. Residues 359–437 (GFAETEKDFE…IGKFEFEFVD (79 aa)) form the OCT domain.

It belongs to the TRAFAC class OBG-HflX-like GTPase superfamily. OBG GTPase family. As to quaternary structure, monomer. Requires Mg(2+) as cofactor.

The protein resides in the cytoplasm. An essential GTPase which binds GTP, GDP and possibly (p)ppGpp with moderate affinity, with high nucleotide exchange rates and a fairly low GTP hydrolysis rate. Plays a role in control of the cell cycle, stress response, ribosome biogenesis and in those bacteria that undergo differentiation, in morphogenesis control. In Streptococcus pyogenes serotype M1, this protein is GTPase Obg.